We begin with the raw amino-acid sequence, 257 residues long: Putative cysteine-rich repeat secretory protein 28 (257 aa).

The N-terminal stretch at 1–26 is a signal peptide; the sequence is MFSTFGSVPILTVVAIQLFLIRNVLS. 2 Gnk2-homologous domains span residues 32–136 and 142–254; these read AYLH…TVDS and YEND…LYPF.

This sequence belongs to the cysteine-rich repeat secretory protein family.

Its subcellular location is the secreted. In Arabidopsis thaliana (Mouse-ear cress), this protein is Putative cysteine-rich repeat secretory protein 28 (CRRSP28).